The sequence spans 43 residues: Photosystem II reaction center protein Psb30 (43 aa).

The helical transmembrane segment at 15–35 (VIFQLTFVSLILISGPVVIFL) threads the bilayer.

The protein belongs to the Psb30/Ycf12 family. As to quaternary structure, PSII is composed of 1 copy each of membrane proteins PsbA, PsbB, PsbC, PsbD, PsbE, PsbF, PsbH, PsbI, PsbJ, PsbK, PsbL, PsbM, PsbT, PsbX, PsbY, PsbZ, Psb30/Ycf12, peripheral proteins PsbO, CyanoQ (PsbQ), PsbU, PsbV and a large number of cofactors. It forms dimeric complexes.

Its subcellular location is the cellular thylakoid membrane. In terms of biological role, a core subunit of photosystem II (PSII), probably helps stabilize the reaction center. This is Photosystem II reaction center protein Psb30 from Picosynechococcus sp. (strain ATCC 27264 / PCC 7002 / PR-6) (Agmenellum quadruplicatum).